The sequence spans 108 residues: Small ribosomal subunit protein uS17 (108 aa).

The protein belongs to the universal ribosomal protein uS17 family. Part of the 30S ribosomal subunit.

Its function is as follows. One of the primary rRNA binding proteins, it binds specifically to the 5'-end of 16S ribosomal RNA. The polypeptide is Small ribosomal subunit protein uS17 (Methanoregula boonei (strain DSM 21154 / JCM 14090 / 6A8)).